A 327-amino-acid chain; its full sequence is MTHPVTPKNTTRPTPANKPAASTLHPRNPHQGRYDFDKLIKALPELEKHAITNPSGEATINFSDADAVLTLNKALLAHHYNIKYWDLPKGYLCPPIPGRADYIHQVADLLNNNNSGSENKKPHVLDIGTGASLIYPIIGSQSYGWYFTATDIDPVSINTAKAICEINPNLKKLVTVKQQKNPKNIFKGIIGEHDYFDITVCNPPFHGSMQDVLDANNRKQSKLQKNRARRNPNGQANKFADAKNNLNFGGQNAELWTEGGEFSFISRMINESVGYAQQVNWFTTLVSRAENLKPLDALLRKVGARQIKTINMQHGQKASRILAWRFK.

The disordered stretch occupies residues 1–31 (MTHPVTPKNTTRPTPANKPAASTLHPRNPHQ).

It belongs to the methyltransferase superfamily. METTL16/RlmF family.

The protein resides in the cytoplasm. The enzyme catalyses adenosine(1618) in 23S rRNA + S-adenosyl-L-methionine = N(6)-methyladenosine(1618) in 23S rRNA + S-adenosyl-L-homocysteine + H(+). In terms of biological role, specifically methylates the adenine in position 1618 of 23S rRNA. The sequence is that of Ribosomal RNA large subunit methyltransferase F from Psychrobacter sp. (strain PRwf-1).